Consider the following 140-residue polypeptide: General stress protein 26 (140 aa).

The sequence is that of General stress protein 26 (ydaG) from Bacillus subtilis (strain 168).